A 914-amino-acid chain; its full sequence is Eukaryotic translation initiation factor 3 subunit C-like protein (914 aa).

Residues 1–44 (MSRFFTTGSDSESESSLSGEELVTKPVGGNYGKQPLLLSEDEED) are disordered. Residues 8-21 (GSDSESESSLSGEE) show a composition bias toward low complexity. A phosphoserine mark is found at S9, S11, S13, S15, S16, S18, and S39. The residue at position 99 (K99) is an N6-acetyllysine. Disordered stretches follow at residues 157 to 302 (TSYK…GGEW) and 523 to 543 (QLTPPEGSSKSEQDQAENEGE). S166, S178, S181, and S182 each carry phosphoserine. Acidic residues predominate over residues 166–190 (SADEDAEKNEEDSEGSSDEDEDEDG). Basic and acidic residues predominate over residues 199-216 (KKSEAPSGESRKFLKKMD). Residues 217 to 232 (DEDEDSEDSEDDEDWD) are compositionally biased toward acidic residues. A compositionally biased stretch (basic and acidic residues) spans 261 to 278 (PTTDEDKKAAEKKREDKA). The segment covering 291–300 (EEEEEDNEGG) has biased composition (acidic residues). Over residues 523–532 (QLTPPEGSSK) the composition is skewed to polar residues. T525 carries the post-translational modification Phosphothreonine. Residue K644 is modified to N6-acetyllysine. The region spanning 674–850 (FHLHINLELL…QTVVMHRTEP (177 aa)) is the PCI domain. A disordered region spans residues 886–914 (FRDQKDGYRKNEGYMRRGGYRQQQSQTAY). The segment covering 887 to 900 (RDQKDGYRKNEGYM) has biased composition (basic and acidic residues). Residue S910 is modified to Phosphoserine.

The protein belongs to the eIF-3 subunit C family. As to quaternary structure, component of the eukaryotic translation initiation factor 3 (eIF-3) complex, which is composed of 13 subunits: EIF3A, EIF3B, EIF3C, EIF3D, EIF3E, EIF3F, EIF3G, EIF3H, EIF3I, EIF3J, EIF3K, EIF3L and EIF3M. The eIF-3 complex appears to include 3 stable modules: module A is composed of EIF3A, EIF3B, EIF3G and EIF3I; module B is composed of EIF3F, EIF3H, and EIF3M; and module C is composed of EIF3C, EIF3D, EIF3E, EIF3K and EIF3L. EIF3C of module C binds EIF3B of module A and EIF3H of module B, thereby linking the three modules. EIF3J is a labile subunit that binds to the eIF-3 complex via EIF3B. The eIF-3 complex interacts with RPS6KB1 under conditions of nutrient depletion. Mitogenic stimulation leads to binding and activation of a complex composed of MTOR and RPTOR, leading to phosphorylation and release of RPS6KB1 and binding of EIF4B to eIF-3. In terms of processing, phosphorylated. Phosphorylation is enhanced upon serum stimulation.

It is found in the cytoplasm. Component of the eukaryotic translation initiation factor 3 (eIF-3) complex, which is required for several steps in the initiation of protein synthesis. The eIF-3 complex associates with the 40S ribosome and facilitates the recruitment of eIF-1, eIF-1A, eIF-2:GTP:methionyl-tRNAi and eIF-5 to form the 43S pre-initiation complex (43S PIC). The eIF-3 complex stimulates mRNA recruitment to the 43S PIC and scanning of the mRNA for AUG recognition. The eIF-3 complex is also required for disassembly and recycling of post-termination ribosomal complexes and subsequently prevents premature joining of the 40S and 60S ribosomal subunits prior to initiation. The eIF-3 complex specifically targets and initiates translation of a subset of mRNAs involved in cell proliferation, including cell cycling, differentiation and apoptosis, and uses different modes of RNA stem-loop binding to exert either translational activation or repression. This chain is Eukaryotic translation initiation factor 3 subunit C-like protein (EIF3CL), found in Homo sapiens (Human).